The chain runs to 103 residues: Large ribosomal subunit protein bL21 (103 aa).

Belongs to the bacterial ribosomal protein bL21 family. In terms of assembly, part of the 50S ribosomal subunit. Contacts protein L20.

In terms of biological role, this protein binds to 23S rRNA in the presence of protein L20. This Pseudomonas aeruginosa (strain LESB58) protein is Large ribosomal subunit protein bL21.